The sequence spans 405 residues: 8-amino-7-oxononanoate synthase (405 aa).

Arginine 23 lines the substrate pocket. 114 to 115 (GY) serves as a coordination point for pyridoxal 5'-phosphate. Position 139 (histidine 139) interacts with substrate. The pyridoxal 5'-phosphate site is built by serine 185, histidine 213, and threonine 245. Residue lysine 248 is modified to N6-(pyridoxal phosphate)lysine. Threonine 366 serves as a coordination point for substrate.

This sequence belongs to the class-II pyridoxal-phosphate-dependent aminotransferase family. BioF subfamily. As to quaternary structure, homodimer. It depends on pyridoxal 5'-phosphate as a cofactor.

It carries out the reaction 6-carboxyhexanoyl-[ACP] + L-alanine + H(+) = (8S)-8-amino-7-oxononanoate + holo-[ACP] + CO2. It participates in cofactor biosynthesis; biotin biosynthesis. Catalyzes the decarboxylative condensation of pimeloyl-[acyl-carrier protein] and L-alanine to produce 8-amino-7-oxononanoate (AON), [acyl-carrier protein], and carbon dioxide. This is 8-amino-7-oxononanoate synthase from Delftia acidovorans (strain DSM 14801 / SPH-1).